We begin with the raw amino-acid sequence, 192 residues long: uncharacterized protein (192 aa).

The disordered stretch occupies residues 71–100; the sequence is NNVLPEPSKPNNPVVNPPVSPIQPKTDPEQ. Over residues 77 to 91 the composition is skewed to pro residues; sequence PSKPNNPVVNPPVSP.

This is an uncharacterized protein from Caenorhabditis elegans.